We begin with the raw amino-acid sequence, 357 residues long: Phenylalanine--tRNA ligase alpha subunit (357 aa).

A Mg(2+)-binding site is contributed by glutamate 257.

Belongs to the class-II aminoacyl-tRNA synthetase family. Phe-tRNA synthetase alpha subunit type 1 subfamily. Tetramer of two alpha and two beta subunits. Mg(2+) is required as a cofactor.

It localises to the cytoplasm. It catalyses the reaction tRNA(Phe) + L-phenylalanine + ATP = L-phenylalanyl-tRNA(Phe) + AMP + diphosphate + H(+). The polypeptide is Phenylalanine--tRNA ligase alpha subunit (Ruegeria sp. (strain TM1040) (Silicibacter sp.)).